The chain runs to 249 residues: Sugar fermentation stimulation protein homolog (249 aa).

It belongs to the SfsA family.

The protein is Sugar fermentation stimulation protein homolog of Synechococcus sp. (strain CC9902).